Consider the following 1233-residue polypeptide: MGGALGPALLLTSLFGAWAGLGPGQGEQGMTVAVVFSSSGPPQAQFRARLTPQSFLDLPLEIQPLTVGVNTTNPSSLLTQICGLLGAAHVHGIVFEDNVDTEAVAQILDFISSQTHVPILSISGGSAVVLTPKEPGSAFLQLGVSLEQQLQVLFKVLEEYDWSAFAVITSLHPGHALFLEGVRAVADASHVSWRLLDVVTLELGPGGPRARTQRLLRQLDAPVFVAYCSREEAEVLFAEAAQAGLVGPGHVWLVPNLALGSTDAPPATFPVGLISVVTESWRLSLRQKVRDGVAILALGAHSYWRQHGTLPAPAGDCRVHPGPVSPAREAFYRHLLNVTWEGRDFSFSPGGYLVQPTMVVIALNRHRLWEMVGRWEHGVLYMKYPVWPRYSASLQPVVDSRHLTVATLEERPFVIVESPDPGTGGCVPNTVPCRRQSNHTFSSGDVAPYTKLCCKGFCIDILKKLARVVKFSYDLYLVTNGKHGKRVRGVWNGMIGEVYYKRADMAIGSLTINEERSEIVDFSVPFVETGISVMVARSNGTVSPSAFLEPYSPAVWVMMFVMCLTVVAITVFMFEYFSPVSYNQNLTRGKKSGGPAFTIGKSVWLLWALVFNNSVPIENPRGTTSKIMVLVWAFFAVIFLASYTANLAAFMIQEQYIDTVSGLSDKKFQRPQDQYPPFRFGTVPNGSTERNIRSNYRDMHTHMVKFNQRSVEDALTSLKMGKLDAFIYDAAVLNYMAGKDEGCKLVTIGSGKVFATTGYGIAMQKDSHWKRAIDLALLQFLGDGETQKLETVWLSGICQNEKNEVMSSKLDIDNMAGVFYMLLVAMGLALLVFAWEHLVYWKLRHSVPNSSQLDFLLAFSRGIYSCFSGVQSLASPPRQASPDLTASSAQASVLKMLQAARDMVTTAGVSSSLDRATRTIENWGGGRRAPPPSPCPTPRSGPSPCLPTPDPPPEPSPTGWGPPDGGRAALVRRAPQPPGRPPTPGPPLSDVSRVSRRPAWEARWPVRTGHCGRHLSASERPLSPARCHYSSFPRADRSGRPFLPLFPELEDLPLLGPEQLARREALLHAAWARGSRPRHASLPSSVAEAFARPSSLPAGCTGPACARPDGHSACRRLAQAQSMCLPIYREACQEGEQAGAPAWQHRQHVCLHAHAHLPFCWGAVCPHLPPCASHGSWLSGAWGPLGHRGRTLGLGTGYRDSGGLDEISRVARGTQGFPGPCTWRRISSLESEV.

An N-terminal signal peptide occupies residues 1 to 19 (MGGALGPALLLTSLFGAWA). Over 20–554 (GLGPGQGEQG…SAFLEPYSPA (535 aa)) the chain is Extracellular. N-linked (GlcNAc...) asparagine glycans are attached at residues N70 and N73. C82 and C317 are oxidised to a cystine. Residues N337 and N438 are each glycosylated (N-linked (GlcNAc...) asparagine). 2 disulfides stabilise this stretch: C426-C453 and C433-C454. Residues S509, T511, and R516 each coordinate L-glutamate. N-linked (GlcNAc...) asparagine glycosylation is present at N539. A helical membrane pass occupies residues 555 to 575 (VWVMMFVMCLTVVAITVFMFE). The Cytoplasmic segment spans residues 576-598 (YFSPVSYNQNLTRGKKSGGPAFT). An intramembrane region (discontinuously helical) is located at residues 599–611 (IGKSVWLLWALVF). Residues 601 to 620 (KSVWLLWALVFNNSVPIENP) form a pore-forming region. Over 612 to 626 (NNSVPIENPRGTTSK) the chain is Cytoplasmic. Residues 627-644 (IMVLVWAFFAVIFLASYT) traverse the membrane as a helical segment. The Extracellular segment spans residues 645-813 (ANLAAFMIQE…EVMSSKLDID (169 aa)). An N-linked (GlcNAc...) asparagine glycan is attached at N685. The L-glutamate site is built by S687, T688, and D729. The cysteines at positions 743 and 798 are disulfide-linked. Residues 814–836 (NMAGVFYMLLVAMGLALLVFAWE) form a helical membrane-spanning segment. Over 837–1233 (HLVYWKLRHS…RRISSLESEV (397 aa)) the chain is Cytoplasmic. Phosphoserine is present on residues S875, S881, and S912. Positions 920-994 (IENWGGGRRA…GPPLSDVSRV (75 aa)) are disordered. Composition is skewed to pro residues over residues 929–956 (APPP…PEPS) and 975–987 (PQPP…PGPP). Positions 1231-1233 (SEV) match the PDZ-binding motif.

It belongs to the glutamate-gated ion channel (TC 1.A.10.1) family. NR2C/GRIN2C subfamily. Heterotetramer. Forms heterotetrameric channels composed of two GluN1/zeta subunits (GRIN1), and two identical GluN2/epsilon subunits (GRIN2A, GRIN2B, GRIN2C or GRIN2D) or GluN3 subunits (GRIN3A or GRIN3B) (in vitro). In vivo, the subunit composition may depend on the expression levels of the different subunits. Interacts with PDZ domains of PATJ and DLG4. Interacts (via PDZ-binding motif) with SNX27 (via PDZ domain); the interaction is required for recycling to the plasma membrane when endocytosed and prevent degradation in lysosomes. In terms of tissue distribution, mainly expressed in brain with predominant expression is in the cerebellum, also present in the hippocampus, amygdala, caudate nucleus, corpus callosum, subthalamic nuclei and thalamus. Detected in the heart, skeletal muscle and pancreas.

The protein resides in the cell membrane. Its subcellular location is the postsynaptic cell membrane. The enzyme catalyses Ca(2+)(in) = Ca(2+)(out). It catalyses the reaction Na(+)(in) = Na(+)(out). The catalysed reaction is K(+)(in) = K(+)(out). Its function is as follows. Component of N-methyl-D-aspartate (NMDA) receptors (NMDARs) that function as heterotetrameric, ligand-gated cation channels with high calcium permeability and voltage-dependent block by Mg(2+). Participates in synaptic plasticity for learning and memory formation by contributing to the slow phase of excitatory postsynaptic current and long-term synaptic potentiation. Channel activation requires binding of the neurotransmitter L-glutamate to the GluN2 subunit, glycine or D-serine binding to the GluN1 subunit, plus membrane depolarization to eliminate channel inhibition by Mg(2+). NMDARs mediate simultaneously the potasium efflux and the influx of calcium and sodium. Each GluN2 subunit confers differential attributes to channel properties, including activation, deactivation and desensitization kinetics, pH sensitivity, Ca2(+) permeability, and binding to allosteric modulators. The polypeptide is Glutamate receptor ionotropic, NMDA 2C (Homo sapiens (Human)).